A 595-amino-acid polypeptide reads, in one-letter code: MKNIRNFCIIAHIDHGKSTLADRLLEATGTISGKASQDQLLDNMDLERERGITIKSHAIQMRYTFKGTDYVLNLIDTPGHVDFSYEVSRSIAACEGALLVIDASQGIEAQTISNLYLALEHDLTIIPVLNKIDLPGAMPEEVKDQIVDLLGCDREDIIPASAKQGIGIEDILQAIIERISPPTGLVDAPLQAMIFDSVYNSFKGVEVYFRIFNGTIKQGDQVKFVNTGKSYEADEIGVLRLGQIPQESLSAGYVGYLISGIKNAREVKVGDTITHVNNPCKEAIKGFEDVKPMVYAGIYPVESNEYEELRTAIEKLQLNDASLVWTHESSAALGIGFRCGFLGMLHMEIVQERLEREFDMTVITTVPSVQFHVIDKQGDLHEVNAPSELPDPNLIDEIQEPFIRAQIITKPEFIGNIIKLCVDKRGALQNQTYLTPERVELTFKLPLAEVVFDFFDKLKTISKGYASLDYELLGFEASKLVKLDILLNEEKIDALSAIVHRDKAYELGKKLCAKLKELLPKQMFEIPIQAAIGTKVIARETIKAMRKNVIAKCYGGDISRKRKLLEKQKKGKKRMRQIGSVEVPQEAFLAVLKLE.

One can recognise a tr-type G domain in the interval Lys2 to Thr183. GTP-binding positions include Asp14–Thr19 and Asn130–Asp133.

Belongs to the TRAFAC class translation factor GTPase superfamily. Classic translation factor GTPase family. LepA subfamily.

It is found in the cell inner membrane. The catalysed reaction is GTP + H2O = GDP + phosphate + H(+). Its function is as follows. Required for accurate and efficient protein synthesis under certain stress conditions. May act as a fidelity factor of the translation reaction, by catalyzing a one-codon backward translocation of tRNAs on improperly translocated ribosomes. Back-translocation proceeds from a post-translocation (POST) complex to a pre-translocation (PRE) complex, thus giving elongation factor G a second chance to translocate the tRNAs correctly. Binds to ribosomes in a GTP-dependent manner. This Amoebophilus asiaticus (strain 5a2) protein is Elongation factor 4.